Consider the following 46-residue polypeptide: Large ribosomal subunit protein bL33A (46 aa).

The protein belongs to the bacterial ribosomal protein bL33 family.

This is Large ribosomal subunit protein bL33A from Mesomycoplasma hyopneumoniae (strain 7448) (Mycoplasma hyopneumoniae).